The primary structure comprises 1489 residues: Type-2 histone deacetylase 1 (1489 aa).

4 stretches are compositionally biased toward low complexity: residues 135–163 (NNNN…SPSG), 190–259 (SNGN…SRNL), 281–306 (NIIN…TSTT), and 325–399 (SPTS…NINN). Disordered stretches follow at residues 135–259 (NNNN…SRNL), 281–556 (NIIN…NYQQ), 915–935 (NNNN…DDQL), 955–1024 (NISK…RDRD), and 1151–1185 (STGI…GEQC). The span at 400 to 430 (VANGTPRPSLQTSRLQGKLPSPQQYNTSPSH) shows a compositional bias: polar residues. Composition is skewed to low complexity over residues 431–450 (QQYP…PIQS), 486–553 (NNNN…NNSN), 915–928 (NNNN…NNNN), and 959–988 (NNNN…NNNN). 2 stretches are compositionally biased toward basic and acidic residues: residues 989 to 1001 (RNRD…ERDN) and 1010 to 1024 (IEKE…RDRD). Residues 1158–1180 (STSTPITTTGTATVTPGSTTSST) are compositionally biased toward low complexity. Histidine 1232 acts as the Proton acceptor in catalysis. Residues 1325–1335 (EQNDYDDDDNN) are compositionally biased toward acidic residues. The segment at 1325–1374 (EQNDYDDDDNNNDVNNNNNNNNNNNNNNNNNNNNKNNNNNNSNSITQQST) is disordered. The span at 1336 to 1367 (NDVNNNNNNNNNNNNNNNNNNNNKNNNNNNSN) shows a compositional bias: low complexity.

This sequence belongs to the histone deacetylase family. HD type 2 subfamily.

Its subcellular location is the nucleus. The protein localises to the cytoplasm. It catalyses the reaction N(6)-acetyl-L-lysyl-[histone] + H2O = L-lysyl-[histone] + acetate. In terms of biological role, responsible for the deacetylation of lysine residues on the N-terminal part of the core histones (H2A, H2B, H3 and H4). Histone deacetylation plays an important role in transcriptional regulation, cell cycle progression and developmental events. Histone deacetylases act via the formation of large multiprotein complexes. The chain is Type-2 histone deacetylase 1 (hdaD) from Dictyostelium discoideum (Social amoeba).